A 1035-amino-acid polypeptide reads, in one-letter code: Beta-galactosidase (1035 aa).

2 residues coordinate substrate: Asn-109 and Asp-208. Asp-208 lines the Na(+) pocket. Positions 424, 426, and 469 each coordinate Mg(2+). Residues Glu-469 and 545–548 contribute to the substrate site; that span reads EYAH. Glu-469 functions as the Proton donor in the catalytic mechanism. Glu-545 (nucleophile) is an active-site residue. Mg(2+) is bound at residue Asn-605. Na(+) contacts are provided by Phe-609 and Asn-612. Substrate is bound by residues Asn-612 and Trp-1011.

It belongs to the glycosyl hydrolase 2 family. As to quaternary structure, homotetramer. Mg(2+) serves as cofactor. The cofactor is Na(+).

The enzyme catalyses Hydrolysis of terminal non-reducing beta-D-galactose residues in beta-D-galactosides.. In Klebsiella pneumoniae (strain 342), this protein is Beta-galactosidase.